The sequence spans 711 residues: Probable cadmium-transporting ATPase (711 aa).

The HMA domain occupies 3–66; it reads EKTVYRVDGL…AGAFEHLKII (64 aa). Cys14 and Cys17 together coordinate Cd(2+). The next 5 helical transmembrane spans lie at 89-109, 111-131, 151-171, 317-337, and 347-367; these read WRLL…IMNG, DFYL…YSLF, IAII…VVIL, TPAI…LFGG, and LSVL…VAIV. The active-site 4-aspartylphosphate intermediate is Asp398. A helical membrane pass occupies residues 669-689; sequence VIKLIALLLVIPGWLTLWIAI.

Belongs to the cation transport ATPase (P-type) (TC 3.A.3) family. Type IB subfamily.

The protein localises to the cell membrane. The catalysed reaction is Cd(2+)(in) + ATP + H2O = Cd(2+)(out) + ADP + phosphate + H(+). In terms of biological role, couples the hydrolysis of ATP with the export of cadmium. The polypeptide is Probable cadmium-transporting ATPase (cadA) (Listeria monocytogenes).